Consider the following 655-residue polypeptide: ATP-dependent zinc metalloprotease FtsH (655 aa).

Over 1-17 (MPIETEPNRTRKNFEPK) the chain is Cytoplasmic. The chain crosses the membrane as a helical span at residues 18–38 (RFGGSLFILFTLLLFLNLFVL). Over 39–124 (RGPRFPITAY…APPPSSLSWL (86 aa)) the chain is Lumenal. The helical transmembrane segment at 125–145 (PTLLGWVVPPLIFFGIWSWLI) threads the bilayer. The Cytoplasmic portion of the chain corresponds to 146–655 (NRNQGAGPAA…LNSHQLIGIN (510 aa)). 216–223 (GPPGTGKT) is an ATP binding site. Zn(2+) is bound at residue H440. Residue E441 is part of the active site. Positions 444 and 517 each coordinate Zn(2+).

In the central section; belongs to the AAA ATPase family. This sequence in the C-terminal section; belongs to the peptidase M41 family. In terms of assembly, homohexamer. The cofactor is Zn(2+).

Its subcellular location is the cellular thylakoid membrane. Acts as a processive, ATP-dependent zinc metallopeptidase for both cytoplasmic and membrane proteins. Plays a role in the quality control of integral membrane proteins. In Acaryochloris marina (strain MBIC 11017), this protein is ATP-dependent zinc metalloprotease FtsH.